The sequence spans 266 residues: Vitamin B12-binding protein (266 aa).

An N-terminal signal peptide occupies residues 1–22 (MAKQMFRALGALLLTLPVWLYA). Residues 25–266 (RVITLSPANT…QLCNALSQVN (242 aa)) enclose the Fe/B12 periplasmic-binding domain. Cyanocob(III)alamin-binding positions include Tyr-50 and 242-246 (DWFER). Cysteines 183 and 259 form a disulfide.

It belongs to the BtuF family. The complex is composed of two ATP-binding proteins (BtuD), two transmembrane proteins (BtuC) and a solute-binding protein (BtuF).

The protein resides in the periplasm. Its function is as follows. Part of the ABC transporter complex BtuCDF involved in vitamin B12 import. Binds vitamin B12 and delivers it to the periplasmic surface of BtuC. This Salmonella typhi protein is Vitamin B12-binding protein.